The primary structure comprises 1004 residues: Zinc finger protein 316 (1004 aa).

A disordered region spans residues 1–148 (MAALHTTPDS…EEEEDEDEDD (148 aa)). An N-acetylalanine modification is found at Ala2. Residue Thr7 is modified to Phosphothreonine. A Phosphoserine modification is found at Ser10. Acidic residues predominate over residues 21 to 60 (GSECDPDQEEEEEEEEKGEEVQEVEEEEEEIVVEEEEEGV). The span at 61–72 (AEVVQDAQVEAV) shows a compositional bias: low complexity. Acidic residues predominate over residues 73-95 (AEVEVEADVEEEDVKEVLAEEEC). Ser112 carries the post-translational modification Phosphoserine. A compositionally biased stretch (acidic residues) spans 132 to 148 (EDLEEEEEEEEDEDEDD). The KRAB domain occupies 158–229 (VTFEDVAVYF…DSPRPEEGDI (72 aa)). C2H2-type zinc fingers lie at residues 345-367 (TTCDVCGKVFPHRSRLAKHQRYH), 373-395 (FGCEECGKGFVYRSHLAIHQRTH), 401-423 (FPCPDCGKRFVYKSHLVTHRRIH), 429-451 (YRCAFCGAGFGRRSYLVTHQRTH), and 457-479 (YPCSHCGRSFSQSSALARHQAVH). The C2H2-type 6; degenerate zinc-finger motif lies at 485–512 (HCCPDCGQAFRLRADFQRHRRGGGCAEA). Residues 508–574 (GCAEAGGDGP…TPSGKVDPAP (67 aa)) are disordered. Acidic residues predominate over residues 531–557 (EDTDPGPEGSEVGEADGEAEAAAEERE). 5 C2H2-type zinc fingers span residues 691–713 (WICSDCGKTFGRRAALAKHQRYH), 719–741 (HRCADCGKSFVYGSHLARHRRTH), 747–769 (FPCPECGARFARGSHLAAHVRGH), 775–797 (FVCGVCGAGFSRRAHLTAHGRAH), and 803–825 (YACGECGRRFGQSAALTRHQWAH). A Glycyl lysine isopeptide (Lys-Gly) (interchain with G-Cter in SUMO2) cross-link involves residue Lys829. 4 consecutive C2H2-type zinc fingers follow at residues 831–853 (HRCPDCGKGFGHSSDFKRHRRTH), 859–881 (FRCADCGRGFAQRSNLAKHRRGH), 887–909 (FPCPECGKRFSQRSVLVTHQRTH), and 915–937 (YACANCGRRFSQSSHLLTHMKTH). A disordered region spans residues 936 to 976 (THRGATAAPGSGSAPAPAPKPEAAAKGPSSAGPGERGSALL). The segment covering 939-968 (GATAAPGSGSAPAPAPKPEAAAKGPSSAGP) has biased composition (low complexity). Lys955 participates in a covalent cross-link: Glycyl lysine isopeptide (Lys-Gly) (interchain with G-Cter in SUMO2).

Belongs to the krueppel C2H2-type zinc-finger protein family.

The protein resides in the nucleus. May be involved in transcriptional regulation. This is Zinc finger protein 316 (ZNF316) from Homo sapiens (Human).